Reading from the N-terminus, the 171-residue chain is 3-hydroxydecanoyl-[acyl-carrier-protein] dehydratase (171 aa).

Residue His-70 is part of the active site.

This sequence belongs to the thioester dehydratase family. FabA subfamily. As to quaternary structure, homodimer.

Its subcellular location is the cytoplasm. The enzyme catalyses a (3R)-hydroxyacyl-[ACP] = a (2E)-enoyl-[ACP] + H2O. It catalyses the reaction (3R)-hydroxydecanoyl-[ACP] = (2E)-decenoyl-[ACP] + H2O. It carries out the reaction (2E)-decenoyl-[ACP] = (3Z)-decenoyl-[ACP]. Its pathway is lipid metabolism; fatty acid biosynthesis. Its function is as follows. Necessary for the introduction of cis unsaturation into fatty acids. Catalyzes the dehydration of (3R)-3-hydroxydecanoyl-ACP to E-(2)-decenoyl-ACP and then its isomerization to Z-(3)-decenoyl-ACP. Can catalyze the dehydratase reaction for beta-hydroxyacyl-ACPs with saturated chain lengths up to 16:0, being most active on intermediate chain length. The polypeptide is 3-hydroxydecanoyl-[acyl-carrier-protein] dehydratase (Marinomonas sp. (strain MWYL1)).